Here is a 609-residue protein sequence, read N- to C-terminus: Dihydroxy-acid dehydratase (609 aa).

D81 serves as a coordination point for Mg(2+). [2Fe-2S] cluster is bound at residue C122. Mg(2+) contacts are provided by D123 and K124. At K124 the chain carries N6-carboxylysine. Position 195 (C195) interacts with [2Fe-2S] cluster. E491 is a binding site for Mg(2+). S517 acts as the Proton acceptor in catalysis.

This sequence belongs to the IlvD/Edd family. As to quaternary structure, homodimer. Requires [2Fe-2S] cluster as cofactor. Mg(2+) is required as a cofactor.

The enzyme catalyses (2R)-2,3-dihydroxy-3-methylbutanoate = 3-methyl-2-oxobutanoate + H2O. It carries out the reaction (2R,3R)-2,3-dihydroxy-3-methylpentanoate = (S)-3-methyl-2-oxopentanoate + H2O. Its pathway is amino-acid biosynthesis; L-isoleucine biosynthesis; L-isoleucine from 2-oxobutanoate: step 3/4. It functions in the pathway amino-acid biosynthesis; L-valine biosynthesis; L-valine from pyruvate: step 3/4. Its function is as follows. Functions in the biosynthesis of branched-chain amino acids. Catalyzes the dehydration of (2R,3R)-2,3-dihydroxy-3-methylpentanoate (2,3-dihydroxy-3-methylvalerate) into 2-oxo-3-methylpentanoate (2-oxo-3-methylvalerate) and of (2R)-2,3-dihydroxy-3-methylbutanoate (2,3-dihydroxyisovalerate) into 2-oxo-3-methylbutanoate (2-oxoisovalerate), the penultimate precursor to L-isoleucine and L-valine, respectively. The sequence is that of Dihydroxy-acid dehydratase from Acinetobacter baumannii (strain AB0057).